Reading from the N-terminus, the 388-residue chain is Pepsin A (388 aa).

An N-terminal signal peptide occupies residues 1–15 (MKWLLLLGLVALSEC). A propeptide spans 16–62 (IIYKVPLVRKKSLRRNLSEHGLLKDFLKKHNRNPASKYFPQTEAPTL) (activation peptide). The 310-residue stretch at 76 to 385 (YFGTIGIGTP…DRANNQVGLA (310 aa)) folds into the Peptidase A1 domain. The active site involves D94. A disulfide bridge links C107 with C112. S130 is modified (phosphoserine). The cysteines at positions 268 and 272 are disulfide-linked. The active site involves D277. A disulfide bond links C311 and C344.

It belongs to the peptidase A1 family.

The protein resides in the secreted. It catalyses the reaction Preferential cleavage: hydrophobic, preferably aromatic, residues in P1 and P1' positions. Cleaves 1-Phe-|-Val-2, 4-Gln-|-His-5, 13-Glu-|-Ala-14, 14-Ala-|-Leu-15, 15-Leu-|-Tyr-16, 16-Tyr-|-Leu-17, 23-Gly-|-Phe-24, 24-Phe-|-Phe-25 and 25-Phe-|-Tyr-26 bonds in the B chain of insulin.. Its function is as follows. Shows particularly broad specificity; although bonds involving phenylalanine and leucine are preferred, many others are also cleaved to some extent. This chain is Pepsin A (PGA), found in Macaca mulatta (Rhesus macaque).